Reading from the N-terminus, the 289-residue chain is Protoheme IX farnesyltransferase 2 (289 aa).

9 helical membrane passes run 1–21 (MIKPGIIMGNLISVTGGFLLA), 28–48 (LTLMLMTILGLSLVVASGCGL), 76–96 (YSVLVFSLALGLIGFGLLAIF), 100–120 (IALLFAVIGYLVYVGIYSLYM), 125–145 (VYGTLIGSFSGAVPPVVGYCA), 155–175 (VILLLMFSLWQMPHSYAIAIF), 199–219 (LHIVLYIAVFSLVSALLPLAG), 221–241 (TGIAFMAVTCATSLWWLGMAL), and 260–280 (CSIVTITALSIAMAMDFQLVV).

Belongs to the UbiA prenyltransferase family. Protoheme IX farnesyltransferase subfamily.

Its subcellular location is the cell inner membrane. The catalysed reaction is heme b + (2E,6E)-farnesyl diphosphate + H2O = Fe(II)-heme o + diphosphate. It functions in the pathway porphyrin-containing compound metabolism; heme O biosynthesis; heme O from protoheme: step 1/1. Its function is as follows. Converts heme B (protoheme IX) to heme O by substitution of the vinyl group on carbon 2 of heme B porphyrin ring with a hydroxyethyl farnesyl side group. The chain is Protoheme IX farnesyltransferase 2 from Shewanella woodyi (strain ATCC 51908 / MS32).